A 108-amino-acid polypeptide reads, in one-letter code: Glutaredoxin-1 (108 aa).

The region spanning 3–106 (EEFVQQRLAN…DILSSIGVLR (104 aa)) is the Glutaredoxin domain. C23 and C26 are joined by a disulfide.

Belongs to the glutaredoxin family.

The protein resides in the virion. Functionally, has thioltransferase and dehydroascorbate reductase activities. This Cowpox virus (strain GRI-90 / Grishak) (CPV) protein is Glutaredoxin-1 (OPG075).